Reading from the N-terminus, the 65-residue chain is Putative beta-neurotoxin RjAa2 (65 aa).

The LCN-type CS-alpha/beta domain occupies 1–64; that stretch reads KEGYPMGRDG…VWDSSTNKCG (64 aa). Intrachain disulfides connect Cys11/Cys63, Cys15/Cys37, Cys22/Cys44, and Cys26/Cys46.

Belongs to the long (4 C-C) scorpion toxin superfamily. Sodium channel inhibitor family. Beta subfamily. As to expression, expressed by the venom gland.

It is found in the secreted. Functionally, beta toxins bind voltage-independently at site-4 of sodium channels (Nav) and shift the voltage of activation toward more negative potentials thereby affecting sodium channel activation and promoting spontaneous and repetitive firing. This is Putative beta-neurotoxin RjAa2 from Rhopalurus junceus (Caribbean blue scorpion).